The following is a 306-amino-acid chain: tRNA dimethylallyltransferase (306 aa).

12–19 (GPTAAGKT) contacts ATP. Substrate is bound at residue 14 to 19 (TAAGKT). Interaction with substrate tRNA stretches follow at residues 37 to 40 (DSAL), 161 to 165 (QRINR), and 242 to 247 (RCVGYR).

Belongs to the IPP transferase family. In terms of assembly, monomer. It depends on Mg(2+) as a cofactor.

The catalysed reaction is adenosine(37) in tRNA + dimethylallyl diphosphate = N(6)-dimethylallyladenosine(37) in tRNA + diphosphate. Catalyzes the transfer of a dimethylallyl group onto the adenine at position 37 in tRNAs that read codons beginning with uridine, leading to the formation of N6-(dimethylallyl)adenosine (i(6)A). The chain is tRNA dimethylallyltransferase from Pseudoalteromonas translucida (strain TAC 125).